Here is a 183-residue protein sequence, read N- to C-terminus: Dual-action ribosomal maturation protein DarP (183 aa).

It belongs to the DarP family.

It is found in the cytoplasm. In terms of biological role, member of a network of 50S ribosomal subunit biogenesis factors which assembles along the 30S-50S interface, preventing incorrect 23S rRNA structures from forming. Promotes peptidyl transferase center (PTC) maturation. The sequence is that of Dual-action ribosomal maturation protein DarP from Salmonella enteritidis PT4 (strain P125109).